Here is a 108-residue protein sequence, read N- to C-terminus: UPF0060 membrane protein CC_1976 (108 aa).

Transmembrane regions (helical) follow at residues 4–24 (FAIY…FWAW), 27–47 (LGKS…FALL), 59–79 (AFAA…QVVE), and 85–105 (RWDL…LFGP).

The protein belongs to the UPF0060 family.

Its subcellular location is the cell inner membrane. The sequence is that of UPF0060 membrane protein CC_1976 from Caulobacter vibrioides (strain ATCC 19089 / CIP 103742 / CB 15) (Caulobacter crescentus).